The chain runs to 258 residues: Acyl-[acyl-carrier-protein]--UDP-N-acetylglucosamine O-acyltransferase (258 aa).

This sequence belongs to the transferase hexapeptide repeat family. LpxA subfamily. In terms of assembly, homotrimer.

The protein localises to the cytoplasm. The catalysed reaction is a (3R)-hydroxyacyl-[ACP] + UDP-N-acetyl-alpha-D-glucosamine = a UDP-3-O-[(3R)-3-hydroxyacyl]-N-acetyl-alpha-D-glucosamine + holo-[ACP]. It functions in the pathway glycolipid biosynthesis; lipid IV(A) biosynthesis; lipid IV(A) from (3R)-3-hydroxytetradecanoyl-[acyl-carrier-protein] and UDP-N-acetyl-alpha-D-glucosamine: step 1/6. In terms of biological role, involved in the biosynthesis of lipid A, a phosphorylated glycolipid that anchors the lipopolysaccharide to the outer membrane of the cell. The chain is Acyl-[acyl-carrier-protein]--UDP-N-acetylglucosamine O-acyltransferase from Halorhodospira halophila (strain DSM 244 / SL1) (Ectothiorhodospira halophila (strain DSM 244 / SL1)).